Consider the following 503-residue polypeptide: Guanosine-5'-triphosphate,3'-diphosphate pyrophosphatase (503 aa).

It belongs to the GppA/Ppx family. GppA subfamily.

It catalyses the reaction guanosine 3'-diphosphate 5'-triphosphate + H2O = guanosine 3',5'-bis(diphosphate) + phosphate + H(+). The protein operates within purine metabolism; ppGpp biosynthesis; ppGpp from GTP: step 2/2. Functionally, catalyzes the conversion of pppGpp to ppGpp. Guanosine pentaphosphate (pppGpp) is a cytoplasmic signaling molecule which together with ppGpp controls the 'stringent response', an adaptive process that allows bacteria to respond to amino acid starvation, resulting in the coordinated regulation of numerous cellular activities. In Pseudoalteromonas atlantica (strain T6c / ATCC BAA-1087), this protein is Guanosine-5'-triphosphate,3'-diphosphate pyrophosphatase.